A 670-amino-acid chain; its full sequence is DNA ligase (670 aa).

Residues 36–40, 84–85, and Glu116 each bind NAD(+); these read DEEYD and SL. The active-site N6-AMP-lysine intermediate is the Lys118. NAD(+) is bound by residues Arg139, Glu177, Lys293, and Lys317. Residues Cys411, Cys414, Cys429, and Cys434 each contribute to the Zn(2+) site. A BRCT domain is found at 594-670; that stretch reads KKPSPLKGLT…SYEEFLKMLE (77 aa).

It belongs to the NAD-dependent DNA ligase family. LigA subfamily. The cofactor is Mg(2+). Requires Mn(2+) as cofactor.

The catalysed reaction is NAD(+) + (deoxyribonucleotide)n-3'-hydroxyl + 5'-phospho-(deoxyribonucleotide)m = (deoxyribonucleotide)n+m + AMP + beta-nicotinamide D-nucleotide.. DNA ligase that catalyzes the formation of phosphodiester linkages between 5'-phosphoryl and 3'-hydroxyl groups in double-stranded DNA using NAD as a coenzyme and as the energy source for the reaction. It is essential for DNA replication and repair of damaged DNA. The polypeptide is DNA ligase (Thermodesulfovibrio yellowstonii (strain ATCC 51303 / DSM 11347 / YP87)).